The sequence spans 834 residues: Striatin-interacting protein 2 (834 aa).

Positions 1–48 (MEDPAAPGTGGPPANGNGNGGGKGKQAAPKGREAFRSQRRESEGSVDC) are disordered. Positions 8–24 (GTGGPPANGNGNGGGKG) are enriched in gly residues. A compositionally biased stretch (basic and acidic residues) spans 30 to 43 (KGREAFRSQRRESE). Residues Ser318, Ser329, and Ser354 each carry the phosphoserine modification. Positions 321-345 (SYTLDLGESQLAPPPSKLRGRRGSR) are disordered. The disordered stretch occupies residues 360-382 (ERDLFKTEEPATEEEEESAGDGE). Acidic residues predominate over residues 369 to 379 (PATEEEEESAG).

Belongs to the STRIP family. Part of the core of STRIPAK complexes composed of PP2A catalytic and scaffolding subunits, the striatins (PP2A regulatory subunits), the striatin-associated proteins MOB4, STRIP1 and STRIP2, PDCD10 and members of the STE20 kinases, such as STK24 and STK26. Interacts with CTTNBP2NL.

It is found in the cytoplasm. In terms of biological role, plays a role in the regulation of cell morphology and cytoskeletal organization. Required in the control of cell shape. Calmodulin-binding scaffolding protein which is the center of the striatin-interacting phosphatase and kinase (STRIPAK) complexes. STRIPAK complexes have critical roles in protein (de)phosphorylation and are regulators of multiple signaling pathways including Hippo, MAPK, nuclear receptor and cytoskeleton remodeling. Different types of STRIPAK complexes are involved in a variety of biological processes such as cell growth, differentiation, apoptosis, metabolism and immune regulation. The chain is Striatin-interacting protein 2 from Homo sapiens (Human).